Consider the following 37-residue polypeptide: Non-structural protein 6 (37 aa).

This sequence belongs to the rotavirus A NSP6 family. In terms of assembly, interacts with NSP2 and NSP5.

It localises to the host cytoplasm. The protein localises to the host mitochondrion. The polypeptide is Non-structural protein 6 (Rotavirus A (strain RVA/Human/United States/D/1974/G1P1A[8]) (RV-A)).